A 299-amino-acid chain; its full sequence is ATP phosphoribosyltransferase (299 aa).

Belongs to the ATP phosphoribosyltransferase family. Long subfamily. Mg(2+) is required as a cofactor.

The protein resides in the cytoplasm. It carries out the reaction 1-(5-phospho-beta-D-ribosyl)-ATP + diphosphate = 5-phospho-alpha-D-ribose 1-diphosphate + ATP. It participates in amino-acid biosynthesis; L-histidine biosynthesis; L-histidine from 5-phospho-alpha-D-ribose 1-diphosphate: step 1/9. With respect to regulation, feedback inhibited by histidine. Functionally, catalyzes the condensation of ATP and 5-phosphoribose 1-diphosphate to form N'-(5'-phosphoribosyl)-ATP (PR-ATP). Has a crucial role in the pathway because the rate of histidine biosynthesis seems to be controlled primarily by regulation of HisG enzymatic activity. This Baumannia cicadellinicola subsp. Homalodisca coagulata protein is ATP phosphoribosyltransferase.